Reading from the N-terminus, the 690-residue chain is Eukaryotic translation initiation factor 3 subunit B (690 aa).

Residues 1–11 (MAKKKSEEHSG) show a composition bias toward basic and acidic residues. Positions 1-36 (MAKKKSEEHSGADANDSDYQEEPNFEDPPGFVDNIS) are disordered. Residues 15 to 25 (NDSDYQEEPNF) are compositionally biased toward acidic residues. The RRM domain occupies 57 to 141 (SVVVVDNIPK…HTFAVNLFTD (85 aa)). WD repeat units follow at residues 207 to 246 (TRERFTDTFVKWSPLGTYVVTFHKPGVAIWGGSSFQKIQK), 293 to 331 (DGMSVLSMFRWSHDDKFVARMGENSIHIYETPSFFLLDL), 334 to 369 (IKIPGIRGFSWSPTDNVIAYWVEEQNQIPARVTLME), 442 to 484 (EIRE…KPSL), and 530 to 575 (PDHF…IKRT). The stretch at 595–645 (EEKQKEIKKNLKKYYAAFEQKDRLRLTRASKELLEKRSQLRETFMEYRNKR) forms a coiled coil.

It belongs to the eIF-3 subunit B family. In terms of assembly, component of the eukaryotic translation initiation factor 3 (eIF-3) complex. The eIF-3 complex interacts with pix. Interacts with mxt.

It localises to the cytoplasm. In terms of biological role, RNA-binding component of the eukaryotic translation initiation factor 3 (eIF-3) complex, which is involved in protein synthesis of a specialized repertoire of mRNAs and, together with other initiation factors, stimulates binding of mRNA and methionyl-tRNAi to the 40S ribosome. The eIF-3 complex specifically targets and initiates translation of a subset of mRNAs involved in cell proliferation. The chain is Eukaryotic translation initiation factor 3 subunit B from Drosophila yakuba (Fruit fly).